The following is a 349-amino-acid chain: UPF0284 protein MM_0708 (349 aa).

The protein belongs to the UPF0284 family.

This chain is UPF0284 protein MM_0708, found in Methanosarcina mazei (strain ATCC BAA-159 / DSM 3647 / Goe1 / Go1 / JCM 11833 / OCM 88) (Methanosarcina frisia).